The primary structure comprises 567 residues: Membrane protein insertase YidC (567 aa).

Residues 3 to 23 (IQRIVLFAGLAIVSYLMVLAW) form a helical membrane-spanning segment. Positions 32 to 80 (TEQVAEAQSSSDSSATNSTDDMILPEDNNAGGEEFATPETGSLASTSAN) are disordered. Low complexity predominate over residues 40–52 (SSSDSSATNSTDD). Positions 70-80 (ETGSLASTSAN) are enriched in polar residues. Transmembrane regions (helical) follow at residues 354–374 (FGWL…FYGL), 378–398 (WGVA…HLSA), 445–465 (GGCL…WVLF), 485–505 (MDPY…QMSL), and 522–542 (PLIF…YWLV).

This sequence belongs to the OXA1/ALB3/YidC family. Type 1 subfamily. Interacts with the Sec translocase complex via SecD. Specifically interacts with transmembrane segments of nascent integral membrane proteins during membrane integration.

The protein localises to the cell inner membrane. In terms of biological role, required for the insertion and/or proper folding and/or complex formation of integral membrane proteins into the membrane. Involved in integration of membrane proteins that insert both dependently and independently of the Sec translocase complex, as well as at least some lipoproteins. Aids folding of multispanning membrane proteins. The sequence is that of Membrane protein insertase YidC from Marinobacter nauticus (strain ATCC 700491 / DSM 11845 / VT8) (Marinobacter aquaeolei).